The following is a 330-amino-acid chain: ADP-L-glycero-D-manno-heptose-6-epimerase (330 aa).

NADP(+) is bound by residues 11-12 (FI), 32-33 (DN), K39, K54, 75-79 (EGACS), and N92. The active-site Proton acceptor is the Y139. An NADP(+)-binding site is contributed by K143. Residue N168 participates in substrate binding. 2 residues coordinate NADP(+): V169 and K177. K177 acts as the Proton acceptor in catalysis. Substrate-binding positions include R179, H186, 200 to 203 (FGEY), R213, and Y292.

The protein belongs to the NAD(P)-dependent epimerase/dehydratase family. HldD subfamily. As to quaternary structure, homopentamer. It depends on NADP(+) as a cofactor.

It catalyses the reaction ADP-D-glycero-beta-D-manno-heptose = ADP-L-glycero-beta-D-manno-heptose. Its pathway is nucleotide-sugar biosynthesis; ADP-L-glycero-beta-D-manno-heptose biosynthesis; ADP-L-glycero-beta-D-manno-heptose from D-glycero-beta-D-manno-heptose 7-phosphate: step 4/4. Its function is as follows. Catalyzes the interconversion between ADP-D-glycero-beta-D-manno-heptose and ADP-L-glycero-beta-D-manno-heptose via an epimerization at carbon 6 of the heptose. This Burkholderia ambifaria (strain MC40-6) protein is ADP-L-glycero-D-manno-heptose-6-epimerase.